The chain runs to 3970 residues: Polyketide synthase-nonribosomal peptide synthetase hybrid himA (3970 aa).

Residues 8–443 enclose the Ketosynthase family 3 (KS3) domain; the sequence is SEPIAIIGSA…GTNSHAILES (436 aa). Residues Cys181, His320, and His363 each act as for beta-ketoacyl synthase activity in the active site. Residues 561–876 are malonyl-CoA:ACP transacylase (MAT) domain; the sequence is IFTGQGAQWP…PYAGLLHRGR (316 aa). The segment at 949 to 1083 is N-terminal hotdog fold; that stretch reads HELLGVRTSD…GMVHLHLGEP (135 aa). The segment at 949 to 1253 is dehydratase (DH) domain; it reads HELLGVRTSD…GLTVVALSST (305 aa). Residues 949–1256 enclose the PKS/mFAS DH domain; it reads HELLGVRTSD…VVALSSTGPA (308 aa). His981 (proton acceptor; for dehydratase activity) is an active-site residue. Residues 1098 to 1256 are C-terminal hotdog fold; the sequence is GLNRVDLDEF…VVALSSTGPA (159 aa). Asp1158 (proton donor; for dehydratase activity) is an active-site residue. Residues 2060–2234 are ketoreductase (KR) domain; it reads TYVMIGLTGE…ASVLDIGMVS (175 aa). Positions 2342–2419 constitute a Carrier 1 domain; that stretch reads AIAAILTESF…TLAEEVAKEL (78 aa). Residue Ser2379 is modified to O-(pantetheine 4'-phosphoryl)serine. The disordered stretch occupies residues 2420–2482; sequence FEDRSTSAPP…NDDSDPTAQC (63 aa). Residues 2445–2466 show a composition bias toward low complexity; sequence GSSTDPSSNSDSKSGFDGFSSD. The span at 2467-2477 shows a compositional bias: acidic residues; the sequence is DSSDIANDDSD. The segment at 2487–2919 is condensation (C) domain; sequence PMSLSQARMW…ATTPTERVAT (433 aa). Residues 2974–3381 are adenylation (A) domain; the sequence is SYKAMSDRVN…LGDIANAILK (408 aa). The disordered stretch occupies residues 3466-3495; sequence RPLPASGDEDGDEDTETETGADADADAGAD. Over residues 3472–3492 the composition is skewed to acidic residues; that stretch reads GDEDGDEDTETETGADADADA. The Carrier 2 domain maps to 3496-3574; it reads TTLSDIHSKL…AIAERILRGV (79 aa). At Ser3534 the chain carries O-(pantetheine 4'-phosphoryl)serine. Residues 3633–3866 form a reductase (R) domain region; the sequence is LTGATGFLGR…FIRVETVAEE (234 aa).

It in the C-terminal section; belongs to the NRP synthetase family.

It functions in the pathway secondary metabolite biosynthesis. Functionally, polyketide synthase-nonribosomal peptide synthetase hybrid; part of the him gene cluster that mediates the biosynthesis of himeic acid A, a ubiquitin-activating enzyme (E1) inhibitor. First, himA, together with the trans-enoyl reductase himH, catalyzes the formation of apolyketide chain, which is then condensed with leucine by the NRPS activity of himA. Dieckmann cyclization and release from himA gives a tetramic acid intermediate as the product of himA PKS-NRPS. HimG then catalyzes alpha-oxidation of the tetramic acid ring, with a subsequent rearrangement to yield apyrone intermediate. Two terminal methyl groups of polyketide and amide side chains are oxidized to carboxylic acids by himC cytochrome P450 monooxygenase to form himeic acid A. Himeic acid A is further converted to himeic acids B and C during culture growth. No gene responsible for pyrone to pyridone conversion was found in the him gene cluster and himeic acid A is non-enzymatically converted to himeic acid C by the incorporation of an ammonium nitrogen atom in a pH5 buffer, and to himeic acid B at a conversion ratio of 50% during incubation in MeOH for 5 days. The polypeptide is Polyketide synthase-nonribosomal peptide synthetase hybrid himA (Aspergillus japonicus).